Here is a 434-residue protein sequence, read N- to C-terminus: Trigger factor (434 aa).

The PPIase FKBP-type domain occupies 160-245; sequence GDKVKMNFVG…LTEVQAANLP (86 aa).

Belongs to the FKBP-type PPIase family. Tig subfamily.

Its subcellular location is the cytoplasm. It carries out the reaction [protein]-peptidylproline (omega=180) = [protein]-peptidylproline (omega=0). Involved in protein export. Acts as a chaperone by maintaining the newly synthesized protein in an open conformation. Functions as a peptidyl-prolyl cis-trans isomerase. This chain is Trigger factor, found in Shewanella putrefaciens (strain CN-32 / ATCC BAA-453).